The sequence spans 52 residues: uncharacterized protein (52 aa).

Residues 3 to 46 (KIQLESSNQSVLKLEERRLNLTAEIERIYGQMDLKRKELENANL) adopt a coiled-coil conformation.

This is an uncharacterized protein from Dictyostelium discoideum (Social amoeba).